The following is a 293-amino-acid chain: ATP synthase gamma chain (293 aa).

It belongs to the ATPase gamma chain family. In terms of assembly, F-type ATPases have 2 components, CF(1) - the catalytic core - and CF(0) - the membrane proton channel. CF(1) has five subunits: alpha(3), beta(3), gamma(1), delta(1), epsilon(1). CF(0) has three main subunits: a, b and c.

It localises to the cell inner membrane. In terms of biological role, produces ATP from ADP in the presence of a proton gradient across the membrane. The gamma chain is believed to be important in regulating ATPase activity and the flow of protons through the CF(0) complex. In Gluconacetobacter diazotrophicus (strain ATCC 49037 / DSM 5601 / CCUG 37298 / CIP 103539 / LMG 7603 / PAl5), this protein is ATP synthase gamma chain.